Reading from the N-terminus, the 96-residue chain is Aspartyl/glutamyl-tRNA(Asn/Gln) amidotransferase subunit C (96 aa).

Belongs to the GatC family. In terms of assembly, heterotrimer of A, B and C subunits.

The catalysed reaction is L-glutamyl-tRNA(Gln) + L-glutamine + ATP + H2O = L-glutaminyl-tRNA(Gln) + L-glutamate + ADP + phosphate + H(+). It carries out the reaction L-aspartyl-tRNA(Asn) + L-glutamine + ATP + H2O = L-asparaginyl-tRNA(Asn) + L-glutamate + ADP + phosphate + 2 H(+). Functionally, allows the formation of correctly charged Asn-tRNA(Asn) or Gln-tRNA(Gln) through the transamidation of misacylated Asp-tRNA(Asn) or Glu-tRNA(Gln) in organisms which lack either or both of asparaginyl-tRNA or glutaminyl-tRNA synthetases. The reaction takes place in the presence of glutamine and ATP through an activated phospho-Asp-tRNA(Asn) or phospho-Glu-tRNA(Gln). This is Aspartyl/glutamyl-tRNA(Asn/Gln) amidotransferase subunit C from Fusobacterium nucleatum subsp. nucleatum (strain ATCC 25586 / DSM 15643 / BCRC 10681 / CIP 101130 / JCM 8532 / KCTC 2640 / LMG 13131 / VPI 4355).